The primary structure comprises 73 residues: Homeodomain-only protein (73 aa).

Positions 3-62 form a DNA-binding region, homeobox; degenerate; sequence TEKSVTPTEEQLEILEYNFCKVNKHPDPTTLCLIAAETGLSEEQTLKWFKQRLAEWRKSE.

The protein localises to the nucleus. Its subcellular location is the cytoplasm. Functionally, atypical homeodomain protein which does not bind DNA and is required to modulate cardiac growth and development. May act via an interaction with SRF, leading to modulate the expression of SRF-dependent cardiac-specific genes and cardiac development. May act as a co-chaperone for HSPA1A and HSPA1B chaperone proteins and assist in chaperone-mediated protein refolding. The protein is Homeodomain-only protein (HOPX) of Gallus gallus (Chicken).